We begin with the raw amino-acid sequence, 371 residues long: 3-dehydroquinate synthase (371 aa).

Residues 114–118 (GVVGD), 138–139 (TT), Lys-151, Lys-160, and 178–181 (TLNT) each bind NAD(+). 3 residues coordinate Zn(2+): Glu-193, His-258, and His-275.

It belongs to the sugar phosphate cyclases superfamily. Dehydroquinate synthase family. The cofactor is Co(2+). Zn(2+) serves as cofactor. NAD(+) is required as a cofactor.

The protein resides in the cytoplasm. The enzyme catalyses 7-phospho-2-dehydro-3-deoxy-D-arabino-heptonate = 3-dehydroquinate + phosphate. It functions in the pathway metabolic intermediate biosynthesis; chorismate biosynthesis; chorismate from D-erythrose 4-phosphate and phosphoenolpyruvate: step 2/7. Catalyzes the conversion of 3-deoxy-D-arabino-heptulosonate 7-phosphate (DAHP) to dehydroquinate (DHQ). The sequence is that of 3-dehydroquinate synthase from Synechococcus sp. (strain CC9605).